A 96-amino-acid polypeptide reads, in one-letter code: Small ribosomal subunit protein bS6 (96 aa).

It belongs to the bacterial ribosomal protein bS6 family.

In terms of biological role, binds together with bS18 to 16S ribosomal RNA. This is Small ribosomal subunit protein bS6 from Streptococcus equi subsp. equi (strain 4047).